A 592-amino-acid polypeptide reads, in one-letter code: Endoribonuclease Arlr (592 aa).

Residues 1 to 24 form the signal peptide; that stretch reads MRCLALSAVFLCLTLAGHFHLSDA. Residues 83 to 329 form a disordered region; sequence PTAANKPPPL…FQSSGNSVAT (247 aa). Positions 109–120 are enriched in polar residues; that stretch reads PGSSPFGASQNP. Composition is skewed to low complexity over residues 134–144 and 188–209; these read PSHPSQPSQPS and GISS…TGKT. Pro residues-rich tracts occupy residues 234-249 and 258-267; these read LPAP…PTPG and LPTPQHPVHP. Positions 268 to 294 are enriched in low complexity; the sequence is PTKATSAATPTPTPTPSFSSSVTPTPA. The EndoU domain occupies 329 to 592; that stretch reads TDDEIRQLTE…NLIGSAYPEI (264 aa). Catalysis depends on residues H473, H488, and K531.

Belongs to the ENDOU family. In terms of assembly, monomer. Mn(2+) is required as a cofactor. Predominantly expressed in head. Expressed in fat body cells.

The protein localises to the endoplasmic reticulum lumen. Its subcellular location is the secreted. The catalysed reaction is a ribonucleotidyl-ribonucleotide-RNA + H2O = a 3'-end 3'-phospho-ribonucleotide-RNA + a 5'-end dephospho-ribonucleoside-RNA + H(+). Endoribonuclease that cleaves single-stranded RNAs; unlike its paralog EndoU it does not appear to preferentially cleave at uridylates and releases linear products instead of products that have 2'-3'-cyclic phosphate termini. Preferentially cleaves single stranded RNA at sites with AU, UC and poly-U sites cleaved less efficiently. Targets mRNAs encoding proteins involved in lipid metabolism, particularly those involved in lipolysis, to regulate their expression. This chain is Endoribonuclease Arlr, found in Drosophila melanogaster (Fruit fly).